Consider the following 299-residue polypeptide: ClpXP adapter protein SpxH (299 aa).

This sequence belongs to the SpxH family. Interacts with Spx. Interacts with SpxO/YuzO.

It is found in the cytoplasm. Its activity is regulated as follows. Irreversible aggregation upon several stress conditions prevents interaction with Spx and therefore leads to Spx stabilization. Inhibited by interaction with SpxO/YuzO. Adapter protein required for efficient degradation of Spx by ClpXP under non-stress conditions. Interaction with Spx stabilizes Spx and exposes the C-terminus of Spx for recognition and proteolysis by ClpXP. Is specific for Spx and does not enhance proteolysis by ClpCP protease. Probably binds 2 zinc ions. This Bacillus subtilis (strain 168) protein is ClpXP adapter protein SpxH.